We begin with the raw amino-acid sequence, 224 residues long: uncharacterized protein (224 aa).

A Matrin-type zinc finger spans residues 11–42 (YYCKYCQIFVKDTPFARRSHEQTYKHQDAIKK). The span at 67–80 (ATATTASAVSSELA) shows a compositional bias: low complexity. 2 disordered regions span residues 67–158 (ATAT…RNRE) and 172–224 (VKPK…YDQS). The span at 87-98 (KEHPKLRPSKKK) shows a compositional bias: basic residues. Positions 108-122 (TSSTETDTISTTHTS) are enriched in low complexity. Over residues 175–199 (KNLDKVPKLAENEGNKSLESKESNE) the composition is skewed to basic and acidic residues. Over residues 203 to 216 (VFKKKKSGKLRTKS) the composition is skewed to basic residues.

Its subcellular location is the nucleus. It localises to the nucleolus. This is an uncharacterized protein from Schizosaccharomyces pombe (strain 972 / ATCC 24843) (Fission yeast).